A 417-amino-acid chain; its full sequence is NADH-quinone oxidoreductase subunit D (417 aa).

It belongs to the complex I 49 kDa subunit family. In terms of assembly, NDH-1 is composed of 14 different subunits. Subunits NuoB, C, D, E, F, and G constitute the peripheral sector of the complex.

It is found in the cell inner membrane. It catalyses the reaction a quinone + NADH + 5 H(+)(in) = a quinol + NAD(+) + 4 H(+)(out). Functionally, NDH-1 shuttles electrons from NADH, via FMN and iron-sulfur (Fe-S) centers, to quinones in the respiratory chain. The immediate electron acceptor for the enzyme in this species is believed to be ubiquinone. Couples the redox reaction to proton translocation (for every two electrons transferred, four hydrogen ions are translocated across the cytoplasmic membrane), and thus conserves the redox energy in a proton gradient. The polypeptide is NADH-quinone oxidoreductase subunit D (Albidiferax ferrireducens (strain ATCC BAA-621 / DSM 15236 / T118) (Rhodoferax ferrireducens)).